The following is a 368-amino-acid chain: Histone macroH2A1.1 (368 aa).

The segment at 154 to 177 (AVSSSSAAASSSSSASSSSSVAPK) is disordered. The Macro domain maps to 184–368 (TILSKKTLHL…VYNAELINTN (185 aa)). 10 residues coordinate a glycoprotein: aspartate 203, leucine 204, glutamine 225, valine 226, serine 275, glycine 313, serine 314, glycine 315, asparagine 316, and asparagine 317.

Belongs to the histone H2A family. In terms of assembly, the nucleosome is a histone octamer containing two molecules each of H2A, H2B, H3 and H4 assembled in one H3-H4 heterotetramer and two H2A-H2B heterodimers.

It is found in the nucleus. It localises to the chromosome. Variant histone H2A which replaces conventional H2A in a subset of nucleosomes where it represses transcription. Nucleosomes wrap and compact DNA into chromatin, limiting DNA accessibility to the cellular machineries which require DNA as a template. Histones thereby play a central role in transcription regulation, DNA repair, DNA replication and chromosomal stability. DNA accessibility is regulated via a complex set of post-translational modifications of histones, also called histone code, and nucleosome remodeling. In terms of biological role, specifically binds poly-ADP-ribose and plays a key role in NAD(+) metabolism. Able to bind to the ends of poly-ADP-ribose chains created by PARP1 and cap them. This prevents PARP1 from further addition of ADP-ribose and thus limits the consumption of nuclear NAD(+), allowing the cell to maintain proper NAD(+) levels in both the nucleus and the mitochondria to promote proper mitochondrial respiration. In Capsaspora owczarzaki (strain ATCC 30864), this protein is Histone macroH2A1.1.